Here is a 117-residue protein sequence, read N- to C-terminus: MFKLHPQKKKTQTRNYTGPWRKTPGRLLGLLLIRFYQITLSSFIGNQCRHAPTCSEYIYEAIARHGLWAGAWMGLFRIMRCGPFGTHGFDPVPTSLGNSYYFYKPWCYWKISARHNK.

It belongs to the UPF0161 family.

It is found in the cell inner membrane. Could be involved in insertion of integral membrane proteins into the membrane. The chain is Putative membrane protein insertion efficiency factor from Bartonella quintana (strain Toulouse) (Rochalimaea quintana).